A 732-amino-acid polypeptide reads, in one-letter code: Catalase-peroxidase (732 aa).

Residues 1 to 10 (MDAKTDDKAG) are compositionally biased toward basic and acidic residues. A disordered region spans residues 1–26 (MDAKTDDKAGKCPVAHGPAPRGNRDW). Residues 95-217 (WHSAGTYRTT…LGAVQMGLIY (123 aa)) constitute a cross-link (tryptophyl-tyrosyl-methioninium (Trp-Tyr) (with M-243)). The active-site Proton acceptor is the histidine 96. The tryptophyl-tyrosyl-methioninium (Tyr-Met) (with W-95) cross-link spans 217–243 (YVNPEGPNGNPDPLGSAKDIRETFARM). Residue histidine 258 coordinates heme b.

The protein belongs to the peroxidase family. Peroxidase/catalase subfamily. As to quaternary structure, homodimer or homotetramer. It depends on heme b as a cofactor. Post-translationally, formation of the three residue Trp-Tyr-Met cross-link is important for the catalase, but not the peroxidase activity of the enzyme.

It carries out the reaction H2O2 + AH2 = A + 2 H2O. It catalyses the reaction 2 H2O2 = O2 + 2 H2O. Bifunctional enzyme with both catalase and broad-spectrum peroxidase activity. In Rhodopseudomonas palustris (strain BisB18), this protein is Catalase-peroxidase.